The primary structure comprises 769 residues: Post-GPI attachment to proteins factor 6 (769 aa).

Positions 1-33 (MGRVGAGGTAREAATGSLLLLLLLLARPPPAAA) are cleaved as a signal peptide. Residues 34-543 (SNSKESEAGL…STAQTVAQQR (510 aa)) lie on the Extracellular side of the membrane. N-linked (GlcNAc...) asparagine glycosylation is found at Asn-138 and Asn-411. One can recognise an EGF-like domain in the interval 495–531 (PCLNDCGPYGQCLLLRRYGYVYAGCSCKAGWRGWSCT). 3 disulfide bridges follow: Cys-496–Cys-506, Cys-500–Cys-519, and Cys-521–Cys-530. A helical membrane pass occupies residues 544 to 564 (AAALLLTLSNLMFLAPIAISL). Residues 565–567 (HRS) are Cytoplasmic-facing. The chain crosses the membrane as a helical span at residues 568–588 (FLVEASVYFYTMFFSTFYHAC). Residues 589 to 603 (DQPGEAVLCILSYDT) are Extracellular-facing. Residues 604–624 (LQYCDFLGSGASTWVTILCMA) traverse the membrane as a helical segment. At 625-627 (RLK) the chain is on the cytoplasmic side. A helical transmembrane segment spans residues 628–648 (TILKQVLLVLGTLVIAMSLQM). The Extracellular segment spans residues 649–651 (DRR). Residues 652–672 (GIWNLMGPCVFAFVIMASMWI) form a helical membrane-spanning segment. At 673–688 (YRCGHRGQCYPTSWQR) the chain is on the cytoplasmic side. Residues 689-709 (WVFYLLPGISMASVGIAMYTS) form a helical membrane-spanning segment. The Extracellular segment spans residues 710 to 715 (MMTSDN). A helical transmembrane segment spans residues 716–736 (YYYTHSIWHILLAGSAAFLLP). The Cytoplasmic segment spans residues 737 to 769 (PREEKAGSWACLQKFPCHYQICRNDRDELYTVT).

This sequence belongs to the TMEM8 family. Post-translationally, glycosylated.

It localises to the cell membrane. The protein resides in the lysosome membrane. It catalyses the reaction a 1,2-diacyl-sn-glycero-3-phosphocholine + H2O = a 1-acyl-sn-glycero-3-phosphocholine + a fatty acid + H(+). Involved in the lipid remodeling steps of GPI-anchor maturation. Lipid remodeling steps consist in the generation of 2 saturated fatty chains at the sn-2 position of GPI-anchor proteins (GPI-AP). Has phospholipase A2 activity that removes an acyl-chain at the sn-2 position of GPI-anchors during the remodeling of GPI. Required for the shedding of the GPI-AP CRIPTO, but not CFC1, at the cell surface. Shedding of CRIPTO modulates Nodal signaling by allowing soluble CRIPTO to act as a Nodal coreceptor on other cells. Also indirectly involved in the translocation of RAC1 from the cytosol to the plasma membrane by maintaining the steady state amount of CAV1-enriched plasma membrane subdomains, stabilizing RAC1 at the plasma membrane. The chain is Post-GPI attachment to proteins factor 6 from Mus musculus (Mouse).